We begin with the raw amino-acid sequence, 396 residues long: L-lactate dehydrogenase (396 aa).

The 380-residue stretch at 1 to 380 (MIISAASDYR…SGDSLVQELG (380 aa)) folds into the FMN hydroxy acid dehydrogenase domain. Tyrosine 24 is a substrate binding site. FMN-binding residues include serine 106 and glutamine 127. Substrate is bound at residue tyrosine 129. Threonine 155 provides a ligand contact to FMN. Arginine 164 serves as a coordination point for substrate. Residue lysine 251 participates in FMN binding. Catalysis depends on histidine 275, which acts as the Proton acceptor. Arginine 278 is a substrate binding site. 306 to 330 (DSGIRNGLDVVRMIALGADTVLLGR) is an FMN binding site.

It belongs to the FMN-dependent alpha-hydroxy acid dehydrogenase family. It depends on FMN as a cofactor.

Its subcellular location is the cell inner membrane. It carries out the reaction (S)-lactate + A = pyruvate + AH2. Functionally, catalyzes the conversion of L-lactate to pyruvate. Is coupled to the respiratory chain. In Salmonella schwarzengrund (strain CVM19633), this protein is L-lactate dehydrogenase.